We begin with the raw amino-acid sequence, 82 residues long: Cytochrome c oxidase subunit 8, mitochondrial (82 aa).

A mitochondrion-targeting transit peptide spans 1–31; the sequence is MFSRVALRAAPRQQPFSLVARRTFQTTRAQL. The Mitochondrial matrix portion of the chain corresponds to 32–52; that stretch reads SSPYHYPEGPRSNLPFNPKTR. The helical transmembrane segment at 53–75 threads the bilayer; the sequence is FFWFRYLMYCVVGFGSPVAIAVW. Topologically, residues 76 to 82 are mitochondrial intermembrane; the sequence is QTYRPRS.

This sequence belongs to the cytochrome c oxidase VIIc family. In terms of assembly, component of the cytochrome c oxidase (complex IV, CIV), a multisubunit enzyme composed of 11 subunits. The complex is composed of a catalytic core of 3 subunits Cox1, Cox2 and Cox3, encoded in the mitochondrial DNA, and 8 supernumerary subunits Cox4, Cox5a/Cox5, Cox6, Cox7, Cox8, Cox7a/Cox9, Cox6b/Cox12 and Cox6a/Cox13, which are encoded in the nuclear genome. The complex exists as a monomer or a dimer and forms respiratory supercomplexes (SCs) in the inner mitochondrial membrane with NADH-ubiquinone oxidoreductase (complex I, CI) and ubiquinol-cytochrome c oxidoreductase (cytochrome b-c1 complex, complex III, CIII), resulting in various different assemblies (supercomplexes I(1)IV(1), I(1)III(3)IV(2), III(2)IV(1) and III(2)IV(2) as well as larger supercomplexes of compositions like I(1)III(2)IV(5-6)).

The protein resides in the mitochondrion inner membrane. It participates in energy metabolism; oxidative phosphorylation. Component of the cytochrome c oxidase, the last enzyme in the mitochondrial electron transport chain which drives oxidative phosphorylation. The respiratory chain contains 3 multisubunit complexes succinate dehydrogenase (complex II, CII), ubiquinol-cytochrome c oxidoreductase (cytochrome b-c1 complex, complex III, CIII) and cytochrome c oxidase (complex IV, CIV), that cooperate to transfer electrons derived from NADH and succinate to molecular oxygen, creating an electrochemical gradient over the inner membrane that drives transmembrane transport and the ATP synthase. Cytochrome c oxidase is the component of the respiratory chain that catalyzes the reduction of oxygen to water. Electrons originating from reduced cytochrome c in the intermembrane space (IMS) are transferred via the dinuclear copper A center (CU(A)) of Cox2 and heme A of Cox1 to the active site in Cox1, a binuclear center (BNC) formed by heme A3 and copper B (CU(B)). The BNC reduces molecular oxygen to 2 water molecules using 4 electrons from cytochrome c in the IMS and 4 protons from the mitochondrial matrix. In Neurospora crassa (strain ATCC 24698 / 74-OR23-1A / CBS 708.71 / DSM 1257 / FGSC 987), this protein is Cytochrome c oxidase subunit 8, mitochondrial (cox-15).